Reading from the N-terminus, the 761-residue chain is Phosphoribosylformylglycinamidine synthase subunit PurL (761 aa).

H48 is an active-site residue. Residues Y51 and K90 each contribute to the ATP site. Position 92 (E92) interacts with Mg(2+). Substrate is bound by residues S93–H96 and R115. The Proton acceptor role is filled by H94. Position 116 (D116) interacts with Mg(2+). Q239 contacts substrate. A Mg(2+)-binding site is contributed by D267. Residue E311 to Q313 coordinates substrate. ATP contacts are provided by D499 and G536. Residue N537 coordinates Mg(2+). A substrate-binding site is contributed by S539.

Belongs to the FGAMS family. As to quaternary structure, monomer. Part of the FGAM synthase complex composed of 1 PurL, 1 PurQ and 2 PurS subunits.

The protein localises to the cytoplasm. The enzyme catalyses N(2)-formyl-N(1)-(5-phospho-beta-D-ribosyl)glycinamide + L-glutamine + ATP + H2O = 2-formamido-N(1)-(5-O-phospho-beta-D-ribosyl)acetamidine + L-glutamate + ADP + phosphate + H(+). The protein operates within purine metabolism; IMP biosynthesis via de novo pathway; 5-amino-1-(5-phospho-D-ribosyl)imidazole from N(2)-formyl-N(1)-(5-phospho-D-ribosyl)glycinamide: step 1/2. Part of the phosphoribosylformylglycinamidine synthase complex involved in the purines biosynthetic pathway. Catalyzes the ATP-dependent conversion of formylglycinamide ribonucleotide (FGAR) and glutamine to yield formylglycinamidine ribonucleotide (FGAM) and glutamate. The FGAM synthase complex is composed of three subunits. PurQ produces an ammonia molecule by converting glutamine to glutamate. PurL transfers the ammonia molecule to FGAR to form FGAM in an ATP-dependent manner. PurS interacts with PurQ and PurL and is thought to assist in the transfer of the ammonia molecule from PurQ to PurL. This is Phosphoribosylformylglycinamidine synthase subunit PurL from Thermosynechococcus vestitus (strain NIES-2133 / IAM M-273 / BP-1).